The following is a 93-amino-acid chain: Ribonuclease P protein component 1 (93 aa).

This sequence belongs to the eukaryotic/archaeal RNase P protein component 1 family. As to quaternary structure, consists of a catalytic RNA component and at least 4-5 protein subunits.

It localises to the cytoplasm. The enzyme catalyses Endonucleolytic cleavage of RNA, removing 5'-extranucleotides from tRNA precursor.. Part of ribonuclease P, a protein complex that generates mature tRNA molecules by cleaving their 5'-ends. This is Ribonuclease P protein component 1 from Methanothermobacter thermautotrophicus (strain ATCC 29096 / DSM 1053 / JCM 10044 / NBRC 100330 / Delta H) (Methanobacterium thermoautotrophicum).